Here is a 339-residue protein sequence, read N- to C-terminus: D-erythrose-4-phosphate dehydrogenase (339 aa).

11–12 lines the NAD(+) pocket; that stretch reads RI. Residues 153-155, arginine 199, 212-213, and arginine 235 each bind substrate; these read SCT and TK. Catalysis depends on cysteine 154, which acts as the Nucleophile. Asparagine 317 provides a ligand contact to NAD(+).

It belongs to the glyceraldehyde-3-phosphate dehydrogenase family. Epd subfamily. In terms of assembly, homotetramer.

It is found in the cytoplasm. The enzyme catalyses D-erythrose 4-phosphate + NAD(+) + H2O = 4-phospho-D-erythronate + NADH + 2 H(+). It functions in the pathway cofactor biosynthesis; pyridoxine 5'-phosphate biosynthesis; pyridoxine 5'-phosphate from D-erythrose 4-phosphate: step 1/5. Functionally, catalyzes the NAD-dependent conversion of D-erythrose 4-phosphate to 4-phosphoerythronate. The polypeptide is D-erythrose-4-phosphate dehydrogenase (Shewanella halifaxensis (strain HAW-EB4)).